Consider the following 282-residue polypeptide: sn-glycerol-3-phosphate transport system permease protein UgpE (282 aa).

Helical transmembrane passes span 14-34 (LILI…FVAS), 86-106 (MAIA…IVFF), 112-132 (MFFF…RILP), 146-168 (YAGL…QFFL), 201-221 (IAAL…WPLL), and 248-268 (WNYV…VVVL). The ABC transmembrane type-1 domain occupies 78 to 269 (LWNSFVVAMA…IPPILVVVLM (192 aa)).

Belongs to the binding-protein-dependent transport system permease family. The complex is composed of two ATP-binding proteins (UgpC), two transmembrane proteins (UgpA and UgpE) and a solute-binding protein (UgpB).

The protein resides in the cell inner membrane. Its function is as follows. Part of the ABC transporter complex UgpBAEC involved in sn-glycerol-3-phosphate (G3P) import. Probably responsible for the translocation of the substrate across the membrane. This is sn-glycerol-3-phosphate transport system permease protein UgpE (ugpE) from Brucella melitensis biotype 1 (strain ATCC 23456 / CCUG 17765 / NCTC 10094 / 16M).